The sequence spans 282 residues: 2-dehydro-3-deoxyphosphooctonate aldolase (282 aa).

This sequence belongs to the KdsA family.

The protein localises to the cytoplasm. The catalysed reaction is D-arabinose 5-phosphate + phosphoenolpyruvate + H2O = 3-deoxy-alpha-D-manno-2-octulosonate-8-phosphate + phosphate. The protein operates within carbohydrate biosynthesis; 3-deoxy-D-manno-octulosonate biosynthesis; 3-deoxy-D-manno-octulosonate from D-ribulose 5-phosphate: step 2/3. Its pathway is bacterial outer membrane biogenesis; lipopolysaccharide biosynthesis. The sequence is that of 2-dehydro-3-deoxyphosphooctonate aldolase from Shewanella pealeana (strain ATCC 700345 / ANG-SQ1).